Consider the following 258-residue polypeptide: Imidazole glycerol phosphate synthase subunit HisF (258 aa).

Catalysis depends on residues D11 and D130.

This sequence belongs to the HisA/HisF family. In terms of assembly, heterodimer of HisH and HisF.

The protein resides in the cytoplasm. The catalysed reaction is 5-[(5-phospho-1-deoxy-D-ribulos-1-ylimino)methylamino]-1-(5-phospho-beta-D-ribosyl)imidazole-4-carboxamide + L-glutamine = D-erythro-1-(imidazol-4-yl)glycerol 3-phosphate + 5-amino-1-(5-phospho-beta-D-ribosyl)imidazole-4-carboxamide + L-glutamate + H(+). It functions in the pathway amino-acid biosynthesis; L-histidine biosynthesis; L-histidine from 5-phospho-alpha-D-ribose 1-diphosphate: step 5/9. Functionally, IGPS catalyzes the conversion of PRFAR and glutamine to IGP, AICAR and glutamate. The HisF subunit catalyzes the cyclization activity that produces IGP and AICAR from PRFAR using the ammonia provided by the HisH subunit. The protein is Imidazole glycerol phosphate synthase subunit HisF of Blochmanniella pennsylvanica (strain BPEN).